Reading from the N-terminus, the 425-residue chain is Aromatic prenyl transferase PC-22 (425 aa).

L-tryptophan-binding positions include 83–84 (GI) and Glu-92. Substrate is bound by residues Arg-107, Lys-198, Tyr-200, Arg-265, Lys-267, Tyr-269, Tyr-345, Tyr-410, and Tyr-414.

It belongs to the tryptophan dimethylallyltransferase family. In terms of assembly, homodimer.

The protein operates within secondary metabolite biosynthesis. Aromatic prenyl transferase; part of the gene cluster that mediates the biosynthesis of the indole diterpenes penitrems. The geranylgeranyl diphosphate (GGPP) synthase penG catalyzes the first step in penitrem biosynthesis via conversion of farnesyl pyrophosphate and isopentyl pyrophosphate into geranylgeranyl pyrophosphate (GGPP). Condensation of indole-3-glycerol phosphate with GGPP by the prenyl transferase penC then forms 3-geranylgeranylindole (3-GGI). Epoxidation by the FAD-dependent monooxygenase penM leads to a epoxidized-GGI that is substrate of the terpene cyclase penB for cyclization to yield paspaline. Paspaline is subsequently converted to 13-desoxypaxilline by the cytochrome P450 monooxygenase penP, the latter being then converted to paxilline by the cytochrome P450 monooxygenase penQ. Paxilline is converted to beta-paxitriol via C-10 ketoreduction by the short-chain dehydrogenase PC-15 which can be monoprenylated at the C-20 by the indole diterpene prenyltransferase penD. A two-step elimination (acetylation and elimination) process performed by the O-acetyltransferase PC-16 and the P.simplicissimum ptmI-ortholog not yet identified in P.crustosum, leads to the production of the prenylated form of penijanthine. The FAD-linked oxidoreductase ptmO then converts the prenylated form of penijanthine into PC-M5 which is in turn transformed into PC-M4 by the aromatic dimethylallyltransferase PC-22. A series of oxidation steps involving 4 cytochrome P450 monooxygenases (PC-21, PC-05, PC-23, PC-20) and a FAD-dependent monooxygenase (PC-14) are required for the transformation of PC-M4 to penitrems A and E. Synthesis of these final products is proposed to proceed via penitrems D and C (PC-21, PC-05, PC-14) and penitrems B and F (PC-21, PC-05, PC-14, PC-23). This Penicillium crustosum (Blue mold fungus) protein is Aromatic prenyl transferase PC-22.